A 352-amino-acid chain; its full sequence is UDP-N-acetylglucosamine--N-acetylmuramyl-(pentapeptide) pyrophosphoryl-undecaprenol N-acetylglucosamine transferase (352 aa).

Residues 11–13 (TGG), asparagine 120, arginine 161, serine 188, and glutamine 286 contribute to the UDP-N-acetyl-alpha-D-glucosamine site.

Belongs to the glycosyltransferase 28 family. MurG subfamily.

The protein resides in the cell inner membrane. The catalysed reaction is di-trans,octa-cis-undecaprenyl diphospho-N-acetyl-alpha-D-muramoyl-L-alanyl-D-glutamyl-meso-2,6-diaminopimeloyl-D-alanyl-D-alanine + UDP-N-acetyl-alpha-D-glucosamine = di-trans,octa-cis-undecaprenyl diphospho-[N-acetyl-alpha-D-glucosaminyl-(1-&gt;4)]-N-acetyl-alpha-D-muramoyl-L-alanyl-D-glutamyl-meso-2,6-diaminopimeloyl-D-alanyl-D-alanine + UDP + H(+). It functions in the pathway cell wall biogenesis; peptidoglycan biosynthesis. Its function is as follows. Cell wall formation. Catalyzes the transfer of a GlcNAc subunit on undecaprenyl-pyrophosphoryl-MurNAc-pentapeptide (lipid intermediate I) to form undecaprenyl-pyrophosphoryl-MurNAc-(pentapeptide)GlcNAc (lipid intermediate II). The sequence is that of UDP-N-acetylglucosamine--N-acetylmuramyl-(pentapeptide) pyrophosphoryl-undecaprenol N-acetylglucosamine transferase from Prochlorococcus marinus (strain NATL2A).